Consider the following 156-residue polypeptide: Cell division protein SepF (156 aa).

The tract at residues 30–49 is disordered; that stretch reads NAAAPSTTETSVVRQDDRPK.

It belongs to the SepF family. As to quaternary structure, homodimer. Interacts with FtsZ.

Its subcellular location is the cytoplasm. Its function is as follows. Cell division protein that is part of the divisome complex and is recruited early to the Z-ring. Probably stimulates Z-ring formation, perhaps through the cross-linking of FtsZ protofilaments. Its function overlaps with FtsA. The chain is Cell division protein SepF from Exiguobacterium sp. (strain ATCC BAA-1283 / AT1b).